We begin with the raw amino-acid sequence, 200 residues long: MARYTGPAWKLSRRLGISLSGTGKELEKRPYAPGPHGPNQRKKLSEYGLQLQEKQKLRHMYGMTERQFRRTFDQAGKMPGKHGENFMILLEARLDNLVYRMGLARTRRAARQLVNHGHIMVDGARVDIPSYRVKPGQTISVREKSNSLVVVKEAIEVNNFVPEYLTFDADKLEATYTRHAERSELPAEINEALIVEFYSR.

The disordered stretch occupies residues 22–42 (TGKELEKRPYAPGPHGPNQRK). Residues 92-152 (ARLDNLVYRM…EKSNSLVVVK (61 aa)) form the S4 RNA-binding domain.

The protein belongs to the universal ribosomal protein uS4 family. Part of the 30S ribosomal subunit. Contacts protein S5. The interaction surface between S4 and S5 is involved in control of translational fidelity.

Functionally, one of the primary rRNA binding proteins, it binds directly to 16S rRNA where it nucleates assembly of the body of the 30S subunit. Its function is as follows. With S5 and S12 plays an important role in translational accuracy. This chain is Small ribosomal subunit protein uS4, found in Bacillus cereus (strain B4264).